Reading from the N-terminus, the 193-residue chain is Acyl carrier protein phosphodiesterase (193 aa).

The protein belongs to the AcpH family.

The catalysed reaction is holo-[ACP] + H2O = apo-[ACP] + (R)-4'-phosphopantetheine + H(+). In terms of biological role, converts holo-ACP to apo-ACP by hydrolytic cleavage of the phosphopantetheine prosthetic group from ACP. The sequence is that of Acyl carrier protein phosphodiesterase from Escherichia coli O139:H28 (strain E24377A / ETEC).